The sequence spans 406 residues: MMTDTVDDVDLPYDKDSASQQEKITALQERLEVLETQNEEMRDKLLDTNAENNKYQQKLERLTHENKKLKQSPLFVATVQEITDEGVIIKQHGNNQEALTEVTDEMREELEPDARVAVNNSLSIVKRLDKETDVRARVMQVEHSPDVTYEDIGGLEEQMQEVRETVEMPLDRPEMFAEVGIDPPSGVLLYGPPGTGKTMLAKAVANQTNASFIKMAGSELVHKFIGEGAKLVRDLFEVARENEPAVIFIDEIDAIASKRTDSKTSGDAEVQRTMMQLLAEMDGFDERGNIRIIAATNRFDMLDPAILRPGRFDRLIEVPKPNEDGREIIFQIHTRKMNVSDDVDFVELAEMADNASGADIKAVCTEAGMFAIRDDRTEIFMQDFVDAWEKIQQEASDETEVSRAFA.

A coiled-coil region spans residues 13–72 (YDKDSASQQEKITALQERLEVLETQNEEMRDKLLDTNAENNKYQQKLERLTHENKKLKQS). ATP contacts are provided by residues 194–199 (GTGKTM) and His333. The docks into pockets in the proteasome alpha-ring to cause gate opening stretch occupies residues 404-406 (AFA).

The protein belongs to the AAA ATPase family. Homododecamer, in a proposed two stacked hexameric ring configuration, but may also form homohexamer. The hexameric complex has likely a two-ring architecture resembling a top hat that caps the 20S proteasome core at one or both ends. Upon ATP-binding, the C-terminus of PAN probably interacts with the alpha-rings of the proteasome core by binding to the intersubunit pockets. Interacts with SAMP1-MoaE conjugate in vitro, but does not bind to SAMP1 or MoaE alone. Interacts with NcsA.

The protein resides in the cytoplasm. ATPase activity is inhibited by EDTA in vitro. In terms of biological role, ATPase which is responsible for recognizing, binding, unfolding and translocation of substrate proteins into the archaeal 20S proteasome core particle. Is essential for opening the gate of the 20S proteasome via an interaction with its C-terminus, thereby allowing substrate entry and access to the site of proteolysis. Thus, the C-terminus of the proteasomal ATPase functions like a 'key in a lock' to induce gate opening and therefore regulate proteolysis. Unfolding activity requires energy from ATP hydrolysis, whereas ATP binding alone promotes ATPase-20S proteasome association which triggers gate opening, and supports translocation of unfolded substrates. Is also able to cleave other nucleoside triphosphates including GTP and TTP, but the rate of hydrolysis is 4- to 5-fold slower than for ATP. The protein is Proteasome-activating nucleotidase 1 of Haloferax volcanii (strain ATCC 29605 / DSM 3757 / JCM 8879 / NBRC 14742 / NCIMB 2012 / VKM B-1768 / DS2) (Halobacterium volcanii).